A 480-amino-acid polypeptide reads, in one-letter code: G-protein coupled receptor seb-2 (480 aa).

The Extracellular segment spans residues 1–222 (MNPSISTAGA…CMSNGDVEAR (222 aa)). Asn-95 carries N-linked (GlcNAc...) asparagine glycosylation. A helical transmembrane segment spans residues 223-243 (ILAGLLTYSASVIFLIPAVFL). The Cytoplasmic segment spans residues 244–261 (LTLLRPIRCQPMFILHRH). Residues 262-282 (LLISCLLYGAFYLITVSLFVV) traverse the membrane as a helical segment. The Extracellular segment spans residues 283 to 305 (NDAPLSSQVFQNHLFCRLLFSIQ). A helical membrane pass occupies residues 306–328 (LRYLRLTNFTWMLAEAVYLWRLL). Residues 329-343 (HTAQHSEGETLRSYK) are Cytoplasmic-facing. Residues 344-364 (VICWGVPGVITVVYIFVRSLN) traverse the membrane as a helical segment. The Extracellular segment spans residues 365-386 (DDVGMCWIENSTVAWIEWMIIT). A helical transmembrane segment spans residues 387-407 (PSLLAMGVNLLLLGLIVYILV). Residues 408 to 423 (KKLRCDPHLERIQYRK) lie on the Cytoplasmic side of the membrane. A helical transmembrane segment spans residues 424–444 (AVRGALMLIPVFGVQQLLTIY). Over 445–480 (RFRNVCLIYRLLHKSFCRRMCSEILVITSGEAGSRS) the chain is Extracellular.

Belongs to the G-protein coupled receptor 2 family. In terms of tissue distribution, present in the head body-wall muscles from the L1 larval stage through to adulthood. Also expressed between L4 and the adult molt in vulval vm1 muscle cells. These cells play a role in opening the vulva during egg laying.

The protein localises to the cell membrane. Not known. Putative receptor. This Caenorhabditis elegans protein is G-protein coupled receptor seb-2.